The sequence spans 104 residues: MIRKAFVMQVNPDAHEEYQRRHNPIWPELEAVLKSHGAHNYAIYLDKARNLLFAMVEIESEERWNAVASTEICQRWWKYMTDVMPANPDNSPVSSELQEVFYLP.

Y18 serves as a coordination point for substrate. The active-site Proton donor is the H22. Substrate contacts are provided by residues Y41 and W76–W77.

It belongs to the rhamnose mutarotase family. In terms of assembly, homodimer.

The protein resides in the cytoplasm. The enzyme catalyses alpha-L-rhamnose = beta-L-rhamnose. Its pathway is carbohydrate metabolism; L-rhamnose metabolism. Functionally, involved in the anomeric conversion of L-rhamnose. This is L-rhamnose mutarotase from Shigella dysenteriae serotype 1 (strain Sd197).